The following is a 422-amino-acid chain: Solanesyl diphosphate synthase 3, chloroplastic/mitochondrial (422 aa).

Residues 1–32 (MLFTRSVARISSKFLRNRSFYGSSQSLASHRF) constitute a chloroplast and mitochondrion transit peptide. Isopentenyl diphosphate is bound by residues Lys-125, Arg-128, and His-174. Residues Asp-181 and Asp-185 each contribute to the Mg(2+) site. Arg-190 is an an all-trans-polyprenyl diphosphate binding site. Arg-191 serves as a coordination point for isopentenyl diphosphate. Positions 267, 268, 305, and 322 each coordinate an all-trans-polyprenyl diphosphate.

This sequence belongs to the FPP/GGPP synthase family. As to quaternary structure, homodimer. Requires Mg(2+) as cofactor. As to expression, ubiquitous. Highest expression in seeds and shoot apical meristem.

It is found in the plastid. It localises to the chloroplast. The protein resides in the mitochondrion. It catalyses the reaction 5 isopentenyl diphosphate + (2E,6E,10E)-geranylgeranyl diphosphate = all-trans-nonaprenyl diphosphate + 5 diphosphate. Functionally, may be involved in the supply of solanesyl diphosphate for ubiquinone-9 (UQ-9) biosynthesis in mitochondria. Synthesizes C25 to C45 medium / long-chain products depending on the type of substrate available. Can use geranyl diphosphate, farnesyl diphosphate or geranylgeranyl diphosphate as substrates, but not dimethylallyl diphosphate. The protein is Solanesyl diphosphate synthase 3, chloroplastic/mitochondrial of Arabidopsis thaliana (Mouse-ear cress).